We begin with the raw amino-acid sequence, 413 residues long: Putative competence-damage inducible protein (413 aa).

This sequence belongs to the CinA family.

This Thermoanaerobacter sp. (strain X514) protein is Putative competence-damage inducible protein.